Reading from the N-terminus, the 175-residue chain is Phosphopantetheine adenylyltransferase (175 aa).

Serine 10 serves as a coordination point for substrate. ATP contacts are provided by residues 10-11 (SF) and histidine 18. Substrate-binding residues include lysine 42, leucine 74, and arginine 88. ATP contacts are provided by residues 89-91 (GMR), glutamate 99, and 124-130 (WIFTSSS).

Belongs to the bacterial CoaD family. As to quaternary structure, homohexamer. It depends on Mg(2+) as a cofactor.

It is found in the cytoplasm. It catalyses the reaction (R)-4'-phosphopantetheine + ATP + H(+) = 3'-dephospho-CoA + diphosphate. It participates in cofactor biosynthesis; coenzyme A biosynthesis; CoA from (R)-pantothenate: step 4/5. Functionally, reversibly transfers an adenylyl group from ATP to 4'-phosphopantetheine, yielding dephospho-CoA (dPCoA) and pyrophosphate. This chain is Phosphopantetheine adenylyltransferase, found in Desulfatibacillum aliphaticivorans.